We begin with the raw amino-acid sequence, 499 residues long: Bifunctional purine biosynthesis protein PurH (499 aa).

In terms of domain architecture, MGS-like spans 1–144; it reads MIKRALISVF…KNFKDVVVLT (144 aa).

The protein belongs to the PurH family.

It catalyses the reaction (6R)-10-formyltetrahydrofolate + 5-amino-1-(5-phospho-beta-D-ribosyl)imidazole-4-carboxamide = 5-formamido-1-(5-phospho-D-ribosyl)imidazole-4-carboxamide + (6S)-5,6,7,8-tetrahydrofolate. The enzyme catalyses IMP + H2O = 5-formamido-1-(5-phospho-D-ribosyl)imidazole-4-carboxamide. The protein operates within purine metabolism; IMP biosynthesis via de novo pathway; 5-formamido-1-(5-phospho-D-ribosyl)imidazole-4-carboxamide from 5-amino-1-(5-phospho-D-ribosyl)imidazole-4-carboxamide (10-formyl THF route): step 1/1. Its pathway is purine metabolism; IMP biosynthesis via de novo pathway; IMP from 5-formamido-1-(5-phospho-D-ribosyl)imidazole-4-carboxamide: step 1/1. The sequence is that of Bifunctional purine biosynthesis protein PurH from Clostridium botulinum (strain Langeland / NCTC 10281 / Type F).